A 168-amino-acid chain; its full sequence is ATP synthase subunit b, chloroplastic (168 aa).

A helical transmembrane segment spans residues 20-37 (LNLAVVLPIVFTLGRDTL).

The protein belongs to the ATPase B chain family. In terms of assembly, F-type ATPases have 2 components, F(1) - the catalytic core - and F(0) - the membrane proton channel. F(1) has five subunits: alpha(3), beta(3), gamma(1), delta(1), epsilon(1). F(0) has four main subunits: a(1), b(1), b'(1) and c(10-14). The alpha and beta chains form an alternating ring which encloses part of the gamma chain. F(1) is attached to F(0) by a central stalk formed by the gamma and epsilon chains, while a peripheral stalk is formed by the delta, b and b' chains.

The protein localises to the plastid. It is found in the chloroplast thylakoid membrane. Its function is as follows. F(1)F(0) ATP synthase produces ATP from ADP in the presence of a proton or sodium gradient. F-type ATPases consist of two structural domains, F(1) containing the extramembraneous catalytic core and F(0) containing the membrane proton channel, linked together by a central stalk and a peripheral stalk. During catalysis, ATP synthesis in the catalytic domain of F(1) is coupled via a rotary mechanism of the central stalk subunits to proton translocation. Component of the F(0) channel, it forms part of the peripheral stalk, linking F(1) to F(0). This is ATP synthase subunit b, chloroplastic from Ostreococcus tauri.